The sequence spans 22 residues: Heliocin (22 aa).

A Pyrrolidone carboxylic acid modification is found at Gln-1. A disordered region spans residues 1 to 22 (QRFIHPTYRPPPQPRRPVIMRA). An O-linked (GalNAc...) threonine glycan is attached at Thr-7.

As to quaternary structure, monomer. Hemolymph.

It is found in the secreted. In terms of biological role, has antibacterial activity, preferentially against Gram-negative bacteria. The sequence is that of Heliocin from Heliothis virescens (Tobacco budworm moth).